The following is a 268-amino-acid chain: Interleukin-1 alpha (268 aa).

A propeptide spanning residues 1–112 is cleaved from the precursor; that stretch reads MAKVPDLFED…DTEEEIIKPR (112 aa). Lys82 is modified (N6-acetyllysine). The nuclear localization signal (NLS) stretch occupies residues 82–86; that stretch reads KKRRL. Ser87 bears the Phosphoserine mark. Residues Asn102 and Asn141 are each glycosylated (N-linked (GlcNAc...) asparagine).

This sequence belongs to the IL-1 family. Monomer. Interacts with TMED10; the interaction mediates the translocation from the cytoplasm into the ERGIC (endoplasmic reticulum-Golgi intermediate compartment) and thereby secretion. Interacts with IL1R1. Interacts with S100A13; this interaction is the first step in the export of IL1A, followed by direct translocation of this complex across the plasma membrane. In terms of processing, acetylated within its nuclear localization sequence, which impacts subcellular localization. Post-translationally, proteolytic processed by CAPN1 in a calcium-dependent manner. Cleavage from 31 kDa precursor to 18 kDa biologically active molecules. Phosphorylated. Phosphorylation greatly enhances susceptibility to digestion and promotes the conversion of pre-IL1A alpha to the biologically active IL1A.

It localises to the nucleus. It is found in the cytoplasm. The protein localises to the secreted. Its function is as follows. Cytokine constitutively present intracellularly in nearly all resting non-hematopoietic cells that plays an important role in inflammation and bridges the innate and adaptive immune systems. After binding to its receptor IL1R1 together with its accessory protein IL1RAP, forms the high affinity interleukin-1 receptor complex. Signaling involves the recruitment of adapter molecules such as MYD88, IRAK1 or IRAK4. In turn, mediates the activation of NF-kappa-B and the three MAPK pathways p38, p42/p44 and JNK pathways. Within the cell, acts as an alarmin and cell death results in its liberation in the extracellular space after disruption of the cell membrane to induce inflammation and alert the host to injury or damage. In addition to its role as a danger signal, which occurs when the cytokine is passively released by cell necrosis, directly senses DNA damage and acts as signal for genotoxic stress without loss of cell integrity. This is Interleukin-1 alpha (IL1A) from Capra hircus (Goat).